The sequence spans 106 residues: Large ribosomal subunit protein uL24 (106 aa).

The protein belongs to the universal ribosomal protein uL24 family. In terms of assembly, part of the 50S ribosomal subunit.

One of two assembly initiator proteins, it binds directly to the 5'-end of the 23S rRNA, where it nucleates assembly of the 50S subunit. Its function is as follows. One of the proteins that surrounds the polypeptide exit tunnel on the outside of the subunit. The chain is Large ribosomal subunit protein uL24 from Desulforamulus reducens (strain ATCC BAA-1160 / DSM 100696 / MI-1) (Desulfotomaculum reducens).